Consider the following 857-residue polypeptide: MRLVHGKDAVNALDVSWLSPILVRDPTSPSESAWDLFATFMRTRTMKSTATNMNQHPTTAQICRRFATRLFRGTVSIRPLTLTLGCLAASASASLVAQETATNAAASQADAISKCPVMGNPAGPNRHTVSGAMGNGDWWPNQLNLDMLHQNSVKSNPMGEDFDYAAAFNSLDLAAVKADIKELMNTSQDWWPSDYGHYGPLFIRMAWHSAGTYRVSDGRGGASDGTQRFAPLNSWPDNANLDKARRLLWPIKQKYGSKISWADLMVLTGNCALEDMGFETFGFAGGREDVWEPQKDVYWGPETEWLGDKRYSGDRDLQNPLAAVQMGLIYVNPEGPNGKPDPIAAAKDIRETFGRMAMNDEETVALIAGGHTFGKAHGAASPDGNMGVEPEGEGLAAQGLGWINTHGTGNAGDTITSGLEGAWTSTPAEWSHGYFENLFGYEWKLVKSPAGAWQWTPTDENAKGTVPDAHDASKSHAPMMFTTDLALRMDPEYGKISRRFHDNPEQFEKAFAKAWYKLTHRDMGPVSRLLGDSVPEPQLWQDPIPEATFDVIGSKEIEQLKQKILATNLTSSQLVSTAWASASTFRNSDMRGGANGARIRLAPQKDWEVNEPAELASVLTTLEGVQKEFNASRKDGKQVSMADLIVLGGCAGVEAAAMKAGHAIQVPFTPGRTDATQEMTDVESFEPLKPIADGFRNYQGHNADRPAEEMLVDKANLLSLTAPEMTVLVGGMRALDTNAGAGPLADLGKLTKRPGALTNDFFVNLLDMNTVWKQSPMCEHFFEGRDRESGNLKWTASRVDLVFGSNSQLRGIAEVYASEDAKEKFVKDFVNAWTKVMNLDRFDVNDSESTETQVAAK.

A cross-link (tryptophyl-tyrosyl-methioninium (Trp-Tyr) (with M-356)) is located at residues 207–330 (WHSAGTYRVS…LAAVQMGLIY (124 aa)). Catalysis depends on His-208, which acts as the Proton acceptor. The segment at residues 330–356 (YVNPEGPNGKPDPIAAAKDIRETFGRM) is a cross-link (tryptophyl-tyrosyl-methioninium (Tyr-Met) (with W-207)). His-371 provides a ligand contact to heme b.

This sequence belongs to the peroxidase family. Peroxidase/catalase subfamily. Homodimer or homotetramer. Requires heme b as cofactor. Formation of the three residue Trp-Tyr-Met cross-link is important for the catalase, but not the peroxidase activity of the enzyme.

It catalyses the reaction H2O2 + AH2 = A + 2 H2O. It carries out the reaction 2 H2O2 = O2 + 2 H2O. In terms of biological role, bifunctional enzyme with both catalase and broad-spectrum peroxidase activity. The sequence is that of Catalase-peroxidase from Rhodopirellula baltica (strain DSM 10527 / NCIMB 13988 / SH1).